Reading from the N-terminus, the 813-residue chain is Leucine--tRNA ligase (813 aa).

The 'HIGH' region motif lies at 41 to 51; sequence PYPSGTLHMGH. Positions 575 to 579 match the 'KMSKS' region motif; sequence KMSKS. Residue Lys-578 coordinates ATP.

This sequence belongs to the class-I aminoacyl-tRNA synthetase family.

The protein resides in the cytoplasm. It catalyses the reaction tRNA(Leu) + L-leucine + ATP = L-leucyl-tRNA(Leu) + AMP + diphosphate. This chain is Leucine--tRNA ligase, found in Francisella tularensis subsp. tularensis (strain FSC 198).